Consider the following 105-residue polypeptide: Histone H2A-like 1 (105 aa).

The protein belongs to the histone H2A family. In terms of assembly, the nucleosome is a histone octamer containing two molecules each of H2A, H2B, H3 and H4 assembled in one H3-H4 heterotetramer and two H2A-H2B heterodimers. May be incorporated into a proportion of nucleosomes, replacing one or more H2A molecules. Interacts with H2BC1/TH2B; preferentially dimerizes with H2BC1/TH2B to form nucleosomes. Testis-specific.

The protein localises to the nucleus. It localises to the chromosome. Its function is as follows. Atypical histone H2A which can replace conventional H2A in some nucleosomes and may play a role during spermatogenesis. Nucleosomes wrap and compact DNA into chromatin, limiting DNA accessibility to the cellular machineries which require DNA as a template. Histones thereby play a central role in transcription regulation, DNA repair, DNA replication and chromosomal stability. DNA accessibility is regulated via a complex set of post-translational modifications of histones, also called histone code, and nucleosome remodeling. This is Histone H2A-like 1 from Mus musculus (Mouse).